A 138-amino-acid polypeptide reads, in one-letter code: ATP synthase epsilon chain (138 aa).

It belongs to the ATPase epsilon chain family. As to quaternary structure, F-type ATPases have 2 components, CF(1) - the catalytic core - and CF(0) - the membrane proton channel. CF(1) has five subunits: alpha(3), beta(3), gamma(1), delta(1), epsilon(1). CF(0) has three main subunits: a, b and c.

The protein resides in the cell inner membrane. Produces ATP from ADP in the presence of a proton gradient across the membrane. In Bartonella henselae (strain ATCC 49882 / DSM 28221 / CCUG 30454 / Houston 1) (Rochalimaea henselae), this protein is ATP synthase epsilon chain.